Consider the following 188-residue polypeptide: Large ribosomal subunit protein bL32m (188 aa).

4 residues coordinate Zn(2+): cysteine 110, cysteine 113, cysteine 123, and cysteine 126. The segment at glycine 162 to asparagine 188 is disordered. A compositionally biased stretch (basic and acidic residues) spans proline 165–arginine 181.

The protein belongs to the bacterial ribosomal protein bL32 family. As to quaternary structure, component of the mitochondrial ribosome large subunit (39S) which comprises a 16S rRNA and about 50 distinct proteins. Post-translationally, MRPL32 precursor is processed by the m-AAA protease (composed of AFG3L2 and SPG7), which cleaves the N-terminal transit peptide. Cleavage by the m-AAA protease takes place prior to assembly into the large subunit, an essential step for mitochondrial ribosome (mitoribosome) assembly. Proper processing by the m-AAA protease is dependent on the zinc-binding region within the tightly folded C-terminal domain of MRPL32: zinc-dependent folding halts degradation initiated from the N-terminus and triggers the release of mature MRPL32.

It localises to the mitochondrion. Component of the mitochondrial large ribosomal subunit (mt-LSU). The mitochondrial ribosome (mitoribosome) is a large ribonucleoprotein complex responsible for the synthesis of proteins inside mitochondria. This is Large ribosomal subunit protein bL32m (MRPL32) from Bos taurus (Bovine).